Consider the following 390-residue polypeptide: Neuromedin-B receptor (390 aa).

The disordered stretch occupies residues 1–20 (MPPRSLPNLSLPTEASESEL). Over 1–41 (MPPRSLPNLSLPTEASESELEPEVWENDFLPDSDGTTAELV) the chain is Extracellular. An N-linked (GlcNAc...) asparagine glycan is attached at asparagine 8. Residues 42–65 (IRCVIPSLYLIIISVGLLGNIMLV) form a helical membrane-spanning segment. At 66–79 (KIFLTNSTMRSVPN) the chain is on the cytoplasmic side. The chain crosses the membrane as a helical span at residues 80–99 (IFISNLAAGDLLLLLTCVPV). At 100–117 (DASRYFFDEWVFGKLGCK) the chain is on the extracellular side. Residues cysteine 116 and cysteine 198 are joined by a disulfide bond. The chain crosses the membrane as a helical span at residues 118-139 (LIPAIQLTSVGVSVFTLTALSA). Topologically, residues 140–156 (DRYRAIVNPMDMQTSGV) are cytoplasmic. The helical transmembrane segment at 157–177 (VLWTSLKAVGIWVVSVLLAVP) threads the bilayer. Topologically, residues 178 to 211 (EAVFSEVARIGSSDNSSFTACIPYPQTDELHPKI) are extracellular. Asparagine 192 carries an N-linked (GlcNAc...) asparagine glycan. A helical transmembrane segment spans residues 212-235 (HSVLIFLVYFLIPLVIISIYYYHI). Residues 236–266 (AKTLIRSAHNLPGEYNEHTKKQMETRKRLAK) lie on the Cytoplasmic side of the membrane. The helical transmembrane segment at 267–287 (IVLVFVGCFVFCWFPNHILYL) threads the bilayer. At 288 to 299 (YRSFNYKEIDPS) the chain is on the extracellular side. The helical transmembrane segment at 300-327 (LGHMIVTLVARVLSFSNSCVNPFALYLL) threads the bilayer. The Cytoplasmic segment spans residues 328 to 390 (SESFRKHFNS…GHSTKQEIAL (63 aa)). Cysteine 341 is lipidated: S-palmitoyl cysteine. Serine 352 carries the post-translational modification Phosphoserine.

Belongs to the G-protein coupled receptor 1 family. In terms of tissue distribution, brain (olfactory bulb and central thalamic regions), and esophagus.

The protein localises to the cell membrane. Functionally, receptor for neuromedin-B. Contributes to the maintenance of basal sigh rate through signaling in the pre-Botzinger complex, a cluster of several thousand neurons in the ventrolateral medulla responsible for inspiration during respiratory activity. Contributes to the induction of sneezing following exposure to chemical irritants or allergens which causes release of NMB by nasal sensory neurons and activation of NMBR-expressing neurons in the sneeze-evoking region of the brainstem. These in turn activate neurons of the caudal ventral respiratory group, giving rise to the sneezing response. Contributes to induction of acute itch, possibly through its activation on dorsal root ganglion neurons by the NMB peptide. Plays a role in the innate immune response to influenza A virus infection by enhancing interferon alpha expression and reducing expression of IL6. Plays a role in CSF1-induced proliferation of osteoclast precursors by contributing to the positive regulation of the expression of the CSF1 receptor CSF1R. This is Neuromedin-B receptor (Nmbr) from Rattus norvegicus (Rat).